We begin with the raw amino-acid sequence, 227 residues long: UPF0173 metal-dependent hydrolase Cmaq_1073 (227 aa).

This sequence belongs to the UPF0173 family.

The chain is UPF0173 metal-dependent hydrolase Cmaq_1073 from Caldivirga maquilingensis (strain ATCC 700844 / DSM 13496 / JCM 10307 / IC-167).